The following is a 113-amino-acid chain: Prefoldin subunit beta (113 aa).

It belongs to the prefoldin subunit beta family. As to quaternary structure, heterohexamer of two alpha and four beta subunits.

Its subcellular location is the cytoplasm. Molecular chaperone capable of stabilizing a range of proteins. Seems to fulfill an ATP-independent, HSP70-like function in archaeal de novo protein folding. This is Prefoldin subunit beta from Methanococcus maripaludis (strain C6 / ATCC BAA-1332).